Here is a 233-residue protein sequence, read N- to C-terminus: Small ribosomal subunit protein uS2 (233 aa).

The protein belongs to the universal ribosomal protein uS2 family.

This chain is Small ribosomal subunit protein uS2, found in Clostridium perfringens (strain ATCC 13124 / DSM 756 / JCM 1290 / NCIMB 6125 / NCTC 8237 / Type A).